Consider the following 501-residue polypeptide: Trans-cinnamate 4-monooxygenase (501 aa).

The helical transmembrane segment at 3–23 threads the bilayer; sequence LVLLEKALLGLFAAAVLAVAV. Residues 213 to 218 and A302 each bind (E)-cinnamate; that span reads RSRLSQ. Position 443 (C443) interacts with heme.

The protein belongs to the cytochrome P450 family. It depends on heme as a cofactor.

It is found in the membrane. The enzyme catalyses (E)-cinnamate + reduced [NADPH--hemoprotein reductase] + O2 = (E)-4-coumarate + oxidized [NADPH--hemoprotein reductase] + H2O + H(+). The protein operates within phenylpropanoid metabolism; trans-4-coumarate biosynthesis; trans-4-coumarate from trans-cinnamate: step 1/1. Catalyzes the first oxidative step of the phenylpropanoid pathway in higher plants by transforming trans-cinnamate into p-coumarate. The compounds formed by this pathway are essential components for lignification, pollination, and defense against ultraviolet light, predators and pathogens. Can also use 2-naphthoic acid as substrate. This chain is Trans-cinnamate 4-monooxygenase, found in Sorghum bicolor (Sorghum).